We begin with the raw amino-acid sequence, 358 residues long: Chorismate synthase (358 aa).

Arg-46 provides a ligand contact to NADP(+). Residues 123–125 (RSS), 235–236 (NA), Gly-275, 290–294 (KATPS), and Arg-316 each bind FMN.

The protein belongs to the chorismate synthase family. Homotetramer. Requires FMNH2 as cofactor.

It catalyses the reaction 5-O-(1-carboxyvinyl)-3-phosphoshikimate = chorismate + phosphate. It functions in the pathway metabolic intermediate biosynthesis; chorismate biosynthesis; chorismate from D-erythrose 4-phosphate and phosphoenolpyruvate: step 7/7. Its function is as follows. Catalyzes the anti-1,4-elimination of the C-3 phosphate and the C-6 proR hydrogen from 5-enolpyruvylshikimate-3-phosphate (EPSP) to yield chorismate, which is the branch point compound that serves as the starting substrate for the three terminal pathways of aromatic amino acid biosynthesis. This reaction introduces a second double bond into the aromatic ring system. The sequence is that of Chorismate synthase from Aliarcobacter butzleri (strain RM4018) (Arcobacter butzleri).